Here is an 894-residue protein sequence, read N- to C-terminus: Glutamate receptor 3 (894 aa).

Positions 1–28 (MARQKKMGQNVLRAVFFLVLGLLGHSHG) are cleaved as a signal peptide. Residues 29 to 552 (GFPNTISIGG…GVFSFLDPLA (524 aa)) lie on the Extracellular side of the membrane. N-linked (GlcNAc...) asparagine glycans are attached at residues N63, N266, N380, N415, and N422. Cysteines 91 and 340 form a disulfide. Residues P508, T510, and R515 each contribute to the L-glutamate site. Residues 553 to 573 (YEIWMCIVFASIGVSVVLFLV) form a helical membrane-spanning segment. The Cytoplasmic portion of the chain corresponds to 574–602 (SRFSPYEWHLEDNNEEPRDPQSPPDPPNE). The helical; Pore-forming intramembrane region spans 603–618 (FGIFNSLWFSLGAFMQ). Residues 619-621 (QGC) lie within the membrane without spanning it. C621 carries S-palmitoyl cysteine lipidation. Over 622 to 627 (DISPRS) the chain is Cytoplasmic. The helical transmembrane segment at 628–648 (LSGRIVGGVWWFFTLIIISSY) threads the bilayer. Residues 649–823 (TANLAAFLTV…DKTSALSLSN (175 aa)) are Extracellular-facing. L-glutamate is bound by residues S686, T687, and E737. C750 and C805 are joined by a disulfide. Residues 824 to 844 (VAGVFYILVGGLGLAMMVALI) form a helical membrane-spanning segment. Over 845-894 (EFCYKSRAESKRMKLTKNTQNFKPAPATNTQNYATYREGYNVYGTESVKI) the chain is Cytoplasmic. A lipid anchor (S-palmitoyl cysteine) is attached at C847. Residues Y877 and Y887 each carry the phosphotyrosine modification.

This sequence belongs to the glutamate-gated ion channel (TC 1.A.10.1) family. GRIA3 subfamily. In terms of assembly, homotetramer or heterotetramer of pore-forming glutamate receptor subunits. Tetramers may be formed by the dimerization of dimers. Interacts with PICK1, GRIP1 and GRIP2. Found in a complex with GRIA1, GRIA2, GRIA4, CNIH2, CNIH3, CACNG2, CACNG3, CACNG4, CACNG5, CACNG7 and CACNG8. Interacts with CACNG5. Found in a complex with GRIA1, GRIA2, GRIA4, DLG4, CACNG8 and CNIH2.

It is found in the cell membrane. Its subcellular location is the postsynaptic cell membrane. The protein resides in the postsynaptic density membrane. It catalyses the reaction Ca(2+)(in) = Ca(2+)(out). Ionotropic glutamate receptor that functions as a ligand-gated cation channel, gated by L-glutamate and glutamatergic agonists such as alpha-amino-3-hydroxy-5-methyl-4-isoxazolepropionic acid (AMPA), quisqualic acid, and kainic acid. L-glutamate acts as an excitatory neurotransmitter at many synapses in the central nervous system and plays an important role in fast excitatory synaptic transmission by inducing long-term potentiation. Binding of the excitatory neurotransmitter L-glutamate induces a conformation change, leading to the opening of the cation channel, and thereby converts the chemical signal to an electrical impulse upon entry of calcium. The receptor then desensitizes rapidly and enters a transient inactive state, characterized by the presence of bound agonist. In the presence of CACNG8, shows resensitization which is characterized by a delayed accumulation of current flux upon continued application of glutamate. The polypeptide is Glutamate receptor 3 (Macaca fascicularis (Crab-eating macaque)).